The sequence spans 601 residues: Urocanate hydratase (601 aa).

Residues 63 to 64 and Gln-141 each bind NAD(+); that span reads GG. Residues 172-201 are insert; that stretch reads SDRPSALLKQGLSPEGTAPGSGRSSAQVPG. The interval 179–200 is disordered; sequence LKQGLSPEGTAPGSGRSSAQVP. NAD(+)-binding positions include 216 to 218, Glu-236, 282 to 283, 307 to 311, 317 to 318, and Tyr-368; these read GMG, NA, QTSAH, and YL. Residue Cys-456 is part of the active site. Gly-538 lines the NAD(+) pocket.

It belongs to the urocanase family. NAD(+) serves as cofactor.

The protein resides in the cytoplasm. It carries out the reaction 4-imidazolone-5-propanoate = trans-urocanate + H2O. The protein operates within amino-acid degradation; L-histidine degradation into L-glutamate; N-formimidoyl-L-glutamate from L-histidine: step 2/3. Catalyzes the conversion of urocanate to 4-imidazolone-5-propionate. This Ralstonia nicotianae (strain ATCC BAA-1114 / GMI1000) (Ralstonia solanacearum) protein is Urocanate hydratase.